The chain runs to 361 residues: BBSome complex member bbs-5 (361 aa).

This sequence belongs to the BBS5 family. Part of BBSome complex, that contains at least bbs-1, bbs-2, bbs-4, bbs-5, osm-12, bbs-8/ttc-8 and bbs-9. Interacts with bbs-4 (via C-terminus); the interaction is direct.

The protein localises to the cell projection. The protein resides in the cilium membrane. It localises to the cytoplasm. It is found in the cytoskeleton. Its subcellular location is the cilium basal body. The protein localises to the microtubule organizing center. The protein resides in the centrosome. It localises to the centriolar satellite. In terms of biological role, component of the BBSome complex. The BBSome complex is thought to function as a coat complex required for sorting of specific membrane proteins to the primary cilia. The BBSome complex is required for ciliogenesis but is dispensable for centriolar satellite function. Required for BBSome complex ciliary localization but not for the proper complex assembly. Required, redundantly with bbs-4, for cilia biogenesis and both the assembly and movement of intraflagellar transport proteins along the ciliary axoneme. Plays a role in the removal of degraded mechanosensory receptors within the cilia. This Caenorhabditis elegans protein is BBSome complex member bbs-5.